The primary structure comprises 559 residues: Alkaline phosphatase PhoK (559 aa).

The N-terminal stretch at 1 to 19 (MLKHVAAALLLATAMPVVA) is a signal peptide. Zn(2+) is bound by residues D49 and T89. The active-site Phosphothreonine intermediate is T89. A disulfide bridge links C90 with C126. Substrate is bound by residues N110 and 171-173 (KDR). The cysteines at positions 231 and 314 are disulfide-linked. Residues D300, H304, D345, H346, and H491 each contribute to the Zn(2+) site. A disulfide bridge connects residues C545 and C556.

In terms of assembly, monomer. Zn(2+) is required as a cofactor.

Its subcellular location is the secreted. The catalysed reaction is a phosphate monoester + H2O = an alcohol + phosphate. Its function is as follows. Alkaline phosphatase with broad substrate specificity. Precipitates uranium from alkaline solutions. In Sphingomonas sp, this protein is Alkaline phosphatase PhoK.